Consider the following 149-residue polypeptide: Putative pre-16S rRNA nuclease (149 aa).

It belongs to the YqgF nuclease family.

It is found in the cytoplasm. Functionally, could be a nuclease involved in processing of the 5'-end of pre-16S rRNA. This is Putative pre-16S rRNA nuclease from Synechococcus elongatus (strain ATCC 33912 / PCC 7942 / FACHB-805) (Anacystis nidulans R2).